Consider the following 144-residue polypeptide: Large ribosomal subunit protein uL15 (144 aa).

The tract at residues 1–49 (MRLNTLSPAAGSKSAPKRVGRGIGSGLGKTAGRGHKGQKSRSGGGVRVG) is disordered. A compositionally biased stretch (gly residues) spans 21-31 (RGIGSGLGKTA).

The protein belongs to the universal ribosomal protein uL15 family. Part of the 50S ribosomal subunit.

Functionally, binds to the 23S rRNA. The chain is Large ribosomal subunit protein uL15 from Shewanella denitrificans (strain OS217 / ATCC BAA-1090 / DSM 15013).